Here is a 230-residue protein sequence, read N- to C-terminus: Large ribosomal subunit protein uL1 (230 aa).

The protein belongs to the universal ribosomal protein uL1 family. In terms of assembly, part of the 50S ribosomal subunit.

Functionally, binds directly to 23S rRNA. The L1 stalk is quite mobile in the ribosome, and is involved in E site tRNA release. Protein L1 is also a translational repressor protein, it controls the translation of the L11 operon by binding to its mRNA. In Rhodopseudomonas palustris (strain BisA53), this protein is Large ribosomal subunit protein uL1.